Consider the following 331-residue polypeptide: Pyruvate synthase subunit PorB (331 aa).

Positions 21, 24, 59, and 222 each coordinate [4Fe-4S] cluster.

In terms of assembly, heterotetramer of one alpha, one beta, one delta and one gamma chain. [4Fe-4S] cluster is required as a cofactor.

The enzyme catalyses 2 oxidized [2Fe-2S]-[ferredoxin] + pyruvate + CoA = 2 reduced [2Fe-2S]-[ferredoxin] + acetyl-CoA + CO2 + H(+). The chain is Pyruvate synthase subunit PorB (porB) from Pyrococcus horikoshii (strain ATCC 700860 / DSM 12428 / JCM 9974 / NBRC 100139 / OT-3).